The primary structure comprises 193 residues: Interleukin-23 subunit alpha (193 aa).

The N-terminal stretch at 1–22 is a signal peptide; the sequence is MLGSRAVMLMLLLLLLPWTSQG.

Belongs to the IL-6 superfamily. As to quaternary structure, heterodimer with IL12B; disulfide-linked. The heterodimer is known as interleukin IL-23. Interacts with IL23R; this interaction enables recruitment of IL12RB1.

It is found in the secreted. Functionally, associates with IL12B to form the pro-inflammatory cytokine IL-23 that plays different roles in innate and adaptive immunity. Released by antigen-presenting cells such as dendritic cells or macrophages, binds to a heterodimeric receptor complex composed of IL12RB1 and IL23R to activate JAK2 and TYK2 which then phosphorylate the receptor to form a docking site leading to the phosphorylation of STAT3 and STAT4. This process leads to activation of several pathways including p38 MAPK or NF-kappa-B and promotes the production of pro-inflammatory cytokines such as interleukin-17A/IL17A. In turn, participates in the early and effective intracellular bacterial clearance. Promotes the expansion and survival of T-helper 17 cells, a CD4-positive helper T-cell subset that produces IL-17, as well as other IL-17-producing cells. The polypeptide is Interleukin-23 subunit alpha (IL23A) (Sus scrofa (Pig)).